Here is a 286-residue protein sequence, read N- to C-terminus: Undecaprenyl-diphosphatase (286 aa).

The next 7 helical transmembrane spans lie at 50 to 70 (GAAF…VYFW), 97 to 117 (MGWL…IFQD), 126 to 146 (LWIV…ADAV), 156 to 176 (LTYK…IPGV), 200 to 220 (SFLL…YKVM), 236 to 256 (LATL…LKFV), and 264 to 284 (FVWY…FNVI).

Belongs to the UppP family.

The protein resides in the cell membrane. The enzyme catalyses di-trans,octa-cis-undecaprenyl diphosphate + H2O = di-trans,octa-cis-undecaprenyl phosphate + phosphate + H(+). Its function is as follows. Catalyzes the dephosphorylation of undecaprenyl diphosphate (UPP). Confers resistance to bacitracin. The sequence is that of Undecaprenyl-diphosphatase from Arthrobacter sp. (strain FB24).